A 192-amino-acid chain; its full sequence is Ion-translocating oxidoreductase complex subunit B (192 aa).

Residues 1–26 (MNAIWIAVAAVSLLGLAFGAILGYAS) form a hydrophobic region. The region spanning 32–91 (EDDPVVEKIDEILPQSQCGQCGYPGCRPYAEAISCNGEKINRCAPGGEAVMLKIAELLNV) is the 4Fe-4S domain. [4Fe-4S] cluster contacts are provided by cysteine 49, cysteine 52, cysteine 57, cysteine 74, cysteine 117, cysteine 120, cysteine 123, cysteine 127, cysteine 147, cysteine 150, cysteine 153, and cysteine 157. 4Fe-4S ferredoxin-type domains lie at 108–137 (MVAVIDENNCIGCTKCIQACPVDAIVGATR) and 138–167 (AMHTVMSDLCTGCNLCVDPCPTHCISLQPV).

This sequence belongs to the 4Fe4S bacterial-type ferredoxin family. RnfB subfamily. As to quaternary structure, the complex is composed of six subunits: RsxA, RsxB, RsxC, RsxD, RsxE and RsxG. [4Fe-4S] cluster serves as cofactor.

It localises to the cell inner membrane. Part of a membrane-bound complex that couples electron transfer with translocation of ions across the membrane. Required to maintain the reduced state of SoxR. This is Ion-translocating oxidoreductase complex subunit B from Shigella dysenteriae serotype 1 (strain Sd197).